Reading from the N-terminus, the 277-residue chain is Small ribosomal subunit protein uS3 (277 aa).

The KH type-2 domain occupies 38 to 106 (IRRLLATGLE…QVQLNILEVK (69 aa)). Residues 217–277 (AGVEAGRGAP…SAPSAETTES (61 aa)) are disordered. A compositionally biased stretch (basic and acidic residues) spans 225-235 (APDRPRRERPA). Positions 242–261 (SGSSGTTATSTEAGRAAAET) are enriched in low complexity.

This sequence belongs to the universal ribosomal protein uS3 family. In terms of assembly, part of the 30S ribosomal subunit. Forms a tight complex with proteins S10 and S14.

Its function is as follows. Binds the lower part of the 30S subunit head. Binds mRNA in the 70S ribosome, positioning it for translation. The chain is Small ribosomal subunit protein uS3 from Mycobacteroides abscessus (strain ATCC 19977 / DSM 44196 / CCUG 20993 / CIP 104536 / JCM 13569 / NCTC 13031 / TMC 1543 / L948) (Mycobacterium abscessus).